The chain runs to 539 residues: Chaperonin GroEL (539 aa).

ATP is bound by residues 29 to 32, 86 to 90, G413, 476 to 478, and D492; these read TIGP, DGTTT, and NAA.

This sequence belongs to the chaperonin (HSP60) family. In terms of assembly, forms a cylinder of 14 subunits composed of two heptameric rings stacked back-to-back. Interacts with the co-chaperonin GroES.

The protein resides in the cytoplasm. It carries out the reaction ATP + H2O + a folded polypeptide = ADP + phosphate + an unfolded polypeptide.. Functionally, together with its co-chaperonin GroES, plays an essential role in assisting protein folding. The GroEL-GroES system forms a nano-cage that allows encapsulation of the non-native substrate proteins and provides a physical environment optimized to promote and accelerate protein folding. The polypeptide is Chaperonin GroEL (Staphylococcus epidermidis (strain ATCC 12228 / FDA PCI 1200)).